The following is a 384-amino-acid chain: Zinc metalloproteinase nas-12 (384 aa).

Residues 1–25 (MLYIPQFSIYFCLGYLLLFCKISNA) form the signal peptide. A Peptidase M12A domain is found at 73–271 (VSIKGSSMNR…EKLNRLGQCG (199 aa)). 5 disulfides stabilise this stretch: Cys-116–Cys-270, Cys-137–Cys-156, Cys-287–Cys-325, Cys-296–Cys-318, and Cys-305–Cys-322. Zn(2+) is bound at residue His-164. Glu-165 is a catalytic residue. The Zn(2+) site is built by His-168 and His-174. The region spanning 287 to 325 (CQDVATAVSCEGNRRRGMCKNPFYKQMMIKSCQKTCRLC) is the ShKT 1 domain. Asn-340 carries N-linked (GlcNAc...) asparagine glycosylation. Cystine bridges form between Cys-348–Cys-384, Cys-355–Cys-377, and Cys-364–Cys-381. The ShKT 2 domain occupies 348–384 (CEDKHPRCDIYSHNGFCTLPFYDDVRYQLCAKTCNLC).

Zn(2+) is required as a cofactor. Expressed in pharyngeal glands.

Its subcellular location is the secreted. In terms of biological role, metalloprotease. This is Zinc metalloproteinase nas-12 (nas-12) from Caenorhabditis elegans.